Consider the following 190-residue polypeptide: NADH-dependent phenylglyoxylate dehydrogenase subunit gamma (190 aa).

Dimer of heteropentamers composed of an alpha (PadG), a beta (PadI), a gamma (PadE), a delta (PadF) and an epsilon (PadH) subunit.

It carries out the reaction phenylglyoxylate + NAD(+) + CoA = benzoyl-CoA + CO2 + NADH. Activated by magnesium ions and thiamine diphosphate. Functionally, involved in the anaerobic metabolism of phenylalanine and phenylacetate. Catalyzes the oxidative decarboxylation of phenylglyoxylate to benzoyl-CoA and CO(2). It can also react slowly with 2-oxo-3-methylbutanoate and use different electron acceptors such as benzyl viologen, methyl viologen, FAD or FMN, but NAD seems to be the physiological electron acceptor. Also catalyzes an isotope exchange between CO(2) and the carboxyl group which proves partial or complete reversibility of the oxidative decarboxylation reaction. This Aromatoleum evansii (Azoarcus evansii) protein is NADH-dependent phenylglyoxylate dehydrogenase subunit gamma (padE).